The following is a 363-amino-acid chain: Histidinol-phosphate aminotransferase (363 aa).

The residue at position 218 (K218) is an N6-(pyridoxal phosphate)lysine.

Belongs to the class-II pyridoxal-phosphate-dependent aminotransferase family. Histidinol-phosphate aminotransferase subfamily. In terms of assembly, homodimer. Requires pyridoxal 5'-phosphate as cofactor.

The enzyme catalyses L-histidinol phosphate + 2-oxoglutarate = 3-(imidazol-4-yl)-2-oxopropyl phosphate + L-glutamate. The protein operates within amino-acid biosynthesis; L-histidine biosynthesis; L-histidine from 5-phospho-alpha-D-ribose 1-diphosphate: step 7/9. This Xanthomonas oryzae pv. oryzae (strain MAFF 311018) protein is Histidinol-phosphate aminotransferase.